The primary structure comprises 204 residues: Large ribosomal subunit protein uL22m (204 aa).

Residues 1 to 27 constitute a mitochondrion transit peptide; the sequence is MAASITASVWGTLLKIHRGLTASGCLP.

Belongs to the universal ribosomal protein uL22 family. Component of the mitochondrial ribosome large subunit (39S) which comprises a 16S rRNA and about 50 distinct proteins.

It localises to the mitochondrion. The protein is Large ribosomal subunit protein uL22m (mrpl22) of Xenopus tropicalis (Western clawed frog).